Reading from the N-terminus, the 824-residue chain is Leucine--tRNA ligase (824 aa).

The 'HIGH' region signature appears at 40–50 (PYPSGKIHMGH). The 'KMSKS' region motif lies at 580–584 (KMSKS). An ATP-binding site is contributed by lysine 583.

It belongs to the class-I aminoacyl-tRNA synthetase family.

Its subcellular location is the cytoplasm. It catalyses the reaction tRNA(Leu) + L-leucine + ATP = L-leucyl-tRNA(Leu) + AMP + diphosphate. In Alkaliphilus metalliredigens (strain QYMF), this protein is Leucine--tRNA ligase.